A 483-amino-acid chain; its full sequence is Sphingomyelin phosphodiesterase 5 (483 aa).

Residues 1-20 (MSLPDISRRRSPVPQEDWPL) are disordered. Residues 80 to 100 (VLLPLVVVGLPLALVGLALWL) traverse the membrane as a helical segment. E209 lines the Mg(2+) pocket. The active-site Proton acceptor is the H471.

Belongs to the neutral sphingomyelinase family. Mg(2+) serves as cofactor. It depends on Mn(2+) as a cofactor. In terms of tissue distribution, highly expressed in testis, pancreas, epididymis, and brain.

It localises to the mitochondrion inner membrane. It is found in the endoplasmic reticulum membrane. The enzyme catalyses a sphingomyelin + H2O = phosphocholine + an N-acylsphing-4-enine + H(+). It catalyses the reaction N-(hexadecanoyl)-sphing-4-enine-1-phosphocholine + H2O = N-hexadecanoylsphing-4-enine + phosphocholine + H(+). It functions in the pathway lipid metabolism; sphingolipid metabolism. With respect to regulation, activated by anionic phospholipids, specially cardiolipin and phosphatidylserine. Functionally, catalyzes the hydrolysis of membrane sphingomyelin to form phosphorylcholine and ceramide. The protein is Sphingomyelin phosphodiesterase 5 of Mus musculus (Mouse).